Here is an 865-residue protein sequence, read N- to C-terminus: Cadherin-related family member 1 (865 aa).

An N-terminal signal peptide occupies residues 1 to 23 (MKHVRHFIPSLFLSLVHVCLVQA). At 24–705 (NYAPYFFDNG…TKDNPMKALG (682 aa)) the chain is on the extracellular side. Cadherin domains are found at residues 38–137 (NGNM…SPEF), 138–249 (INTP…PPMF), 250–356 (IGTP…PPTF), 362–475 (PQNR…VPKF), 476–579 (SSDY…SPEF), and 571–690 (DVND…GPMA). Residues 706 to 726 (VLAGVMGIMVLITIMISTAMF) form a helical membrane-spanning segment. Topologically, residues 727-865 (WRNKRSNKIM…RNASMGEPHI (139 aa)) are cytoplasmic. The tract at residues 782–810 (ENSNNNVQAAPVPPAAPLPPPPPALAASG) is disordered. A compositionally biased stretch (pro residues) spans 792-805 (PVPPAAPLPPPPPA).

It is found in the membrane. Its function is as follows. Potential calcium-dependent cell-adhesion protein. This is Cadherin-related family member 1 (CDHR1) from Gallus gallus (Chicken).